Reading from the N-terminus, the 607-residue chain is Arginine decarboxylase (607 aa).

Lys-104 carries the post-translational modification N6-(pyridoxal phosphate)lysine. 290-300 (LDCGGGLGVDY) contributes to the substrate binding site.

This sequence belongs to the Orn/Lys/Arg decarboxylase class-II family. SpeA subfamily. It depends on pyridoxal 5'-phosphate as a cofactor. The cofactor is Mg(2+).

The catalysed reaction is L-arginine + H(+) = agmatine + CO2. It functions in the pathway amine and polyamine biosynthesis; agmatine biosynthesis; agmatine from L-arginine: step 1/1. This chain is Arginine decarboxylase (SPE1), found in Avena sativa (Oat).